We begin with the raw amino-acid sequence, 761 residues long: Autophagy-related protein 13 (761 aa).

Composition is skewed to low complexity over residues 1 to 10, 290 to 303, and 327 to 340; these read MLSDFKQQQQ, SSSV…TSLK, and STSP…ISQP. 6 disordered regions span residues 1–25, 277–367, 398–456, 488–507, 544–642, and 691–761; these read MLSD…HDDT, FHKR…SNKS, ISGT…QSDL, DLRL…NMSI, HSSR…SSIS, and YQNV…SRNF. Polar residues-rich tracts occupy residues 344 to 367 and 400 to 411; these read PIQN…SNKS and GTSVPRSFSSST. Positions 429–444 are enriched in low complexity; sequence RFASSFGSRASRRYSS. The segment covering 445-456 has biased composition (polar residues); that stretch reads TSIRQQTPQSDL. Residues 566 to 590 are compositionally biased toward low complexity; sequence QQQQQQQQNQQQSQSPHTNTTSSIH. The span at 600-613 shows a compositional bias: basic and acidic residues; sequence RMKDARPRSEDHQQ. Residues 614-631 are compositionally biased toward polar residues; it reads TKFSAARRSSNISPTTAV. Low complexity predominate over residues 632–642; that stretch reads PSSIGTPSSIS. The span at 695 to 709 shows a compositional bias: acidic residues; that stretch reads FDDDDEDDNDEEEGD. The segment covering 710–720 has biased composition (basic and acidic residues); that stretch reads REGNQLHEGRN. The segment covering 721 to 730 has biased composition (polar residues); it reads STESSQNQSK.

Belongs to the ATG13 family. Fungi subfamily. In terms of assembly, interacts with ATG1 to form the ATG1-ATG13 kinase complex.

It localises to the cytoplasm. The protein resides in the preautophagosomal structure. Plays a key role in autophagy. Activates the atg1 kinase in a nutritional condition dependent manner through the TOR pathway, leading to autophagy. Also involved in cytoplasm to vacuole transport (Cvt) and more specifically in Cvt vesicle formation. Seems to play a role in the switching machinery regulating the conversion between the Cvt pathway and autophagy. Finally, plays an important role in biofilm formation and resistance to antifungal compounds such as fluconazole, itraconazole, terbinafine and caspofungin. In Candida albicans (strain SC5314 / ATCC MYA-2876) (Yeast), this protein is Autophagy-related protein 13.